Reading from the N-terminus, the 358-residue chain is Histidinol-phosphate aminotransferase (358 aa).

Position 211 is an N6-(pyridoxal phosphate)lysine (lysine 211).

This sequence belongs to the class-II pyridoxal-phosphate-dependent aminotransferase family. Histidinol-phosphate aminotransferase subfamily. As to quaternary structure, homodimer. The cofactor is pyridoxal 5'-phosphate.

It carries out the reaction L-histidinol phosphate + 2-oxoglutarate = 3-(imidazol-4-yl)-2-oxopropyl phosphate + L-glutamate. It participates in amino-acid biosynthesis; L-histidine biosynthesis; L-histidine from 5-phospho-alpha-D-ribose 1-diphosphate: step 7/9. The protein is Histidinol-phosphate aminotransferase of Blochmanniella pennsylvanica (strain BPEN).